Here is a 266-residue protein sequence, read N- to C-terminus: Hydroxyethylthiazole kinase (266 aa).

Residue M45 participates in substrate binding. Positions 121 and 167 each coordinate ATP. A substrate-binding site is contributed by G194.

It belongs to the Thz kinase family. It depends on Mg(2+) as a cofactor.

The catalysed reaction is 5-(2-hydroxyethyl)-4-methylthiazole + ATP = 4-methyl-5-(2-phosphooxyethyl)-thiazole + ADP + H(+). It participates in cofactor biosynthesis; thiamine diphosphate biosynthesis; 4-methyl-5-(2-phosphoethyl)-thiazole from 5-(2-hydroxyethyl)-4-methylthiazole: step 1/1. Catalyzes the phosphorylation of the hydroxyl group of 4-methyl-5-beta-hydroxyethylthiazole (THZ). The polypeptide is Hydroxyethylthiazole kinase (Methanocella arvoryzae (strain DSM 22066 / NBRC 105507 / MRE50)).